Consider the following 548-residue polypeptide: Poly(ADP-ribose) glycohydrolase 1 (548 aa).

The protein belongs to the poly(ADP-ribose) glycohydrolase family.

The catalysed reaction is [(1''-&gt;2')-ADP-alpha-D-ribose](n) + H2O = [(1''-&gt;2')-ADP-alpha-D-ribose](n-1) + ADP-D-ribose. Poly(ADP-ribose) synthesized after DNA damage is only present transiently and is rapidly degraded by poly(ADP-ribose) glycohydrolase. Involved in establishing period length of the circadian oscillator. May regulate post-translational poly(ADP-ribosyl)ation of an oscillator component. In Arabidopsis thaliana (Mouse-ear cress), this protein is Poly(ADP-ribose) glycohydrolase 1 (PARG1).